The chain runs to 365 residues: Eukaryotic translation initiation factor 3 subunit H (365 aa).

The MPN domain occupies 15 to 166 (ILLDSLVVMK…LRAWRLSTAA (152 aa)).

This sequence belongs to the eIF-3 subunit H family. Component of the eukaryotic translation initiation factor 3 (eIF-3) complex.

The protein localises to the cytoplasm. Component of the eukaryotic translation initiation factor 3 (eIF-3) complex, which is involved in protein synthesis of a specialized repertoire of mRNAs and, together with other initiation factors, stimulates binding of mRNA and methionyl-tRNAi to the 40S ribosome. The eIF-3 complex specifically targets and initiates translation of a subset of mRNAs involved in cell proliferation. This chain is Eukaryotic translation initiation factor 3 subunit H, found in Caenorhabditis elegans.